The primary structure comprises 437 residues: Histidine--tRNA ligase (437 aa).

This sequence belongs to the class-II aminoacyl-tRNA synthetase family. Homodimer.

Its subcellular location is the cytoplasm. The enzyme catalyses tRNA(His) + L-histidine + ATP = L-histidyl-tRNA(His) + AMP + diphosphate + H(+). In Opitutus terrae (strain DSM 11246 / JCM 15787 / PB90-1), this protein is Histidine--tRNA ligase.